Reading from the N-terminus, the 942-residue chain is Alanine--tRNA ligase (942 aa).

The Zn(2+) site is built by His-586, His-590, Cys-695, and His-699.

This sequence belongs to the class-II aminoacyl-tRNA synthetase family. It depends on Zn(2+) as a cofactor.

It localises to the cytoplasm. The catalysed reaction is tRNA(Ala) + L-alanine + ATP = L-alanyl-tRNA(Ala) + AMP + diphosphate. Catalyzes the attachment of alanine to tRNA(Ala) in a two-step reaction: alanine is first activated by ATP to form Ala-AMP and then transferred to the acceptor end of tRNA(Ala). Also edits incorrectly charged Ser-tRNA(Ala) and Gly-tRNA(Ala) via its editing domain. This chain is Alanine--tRNA ligase, found in Akkermansia muciniphila (strain ATCC BAA-835 / DSM 22959 / JCM 33894 / BCRC 81048 / CCUG 64013 / CIP 107961 / Muc).